The chain runs to 329 residues: Cytosolic arginine sensor for mTORC1 subunit 1 (329 aa).

Phosphoserine is present on serine 14. ACT domains follow at residues 72 to 138 (AEAT…HTLA) and 260 to 321 (GELW…EVLQ). L-arginine contacts are provided by residues 111–112 (SV), glycine 274, 280–281 (IV), and 300–304 (TFNFD).

The protein belongs to the GATS family. Forms homodimers and heterodimers with CASTOR2. Interacts with the GATOR2 complex which is composed of MIOS, SEC13, SEH1L, WDR24 and WDR59; the interaction is negatively regulated by arginine. Interacts with TM4SF5; the interaction is positively regulated by leucine and is negatively regulated by arginine. Post-translationally, phosphorylation at Ser-14 by AKT1, promoting the interaction between CASTOR1 and RNF167. In terms of processing, ubiquitinated by RNF167 via 'Lys-29'-polyubiquitination, leading to its degradation, releasing the GATOR2 complex. Ubiquitination by RNF167 is promoted by phosphorylation at Ser-14 by AKT1.

Its subcellular location is the cytoplasm. The protein resides in the cytosol. Its function is as follows. Functions as an intracellular arginine sensor within the amino acid-sensing branch of the TORC1 signaling pathway. As a homodimer or a heterodimer with CASTOR2, binds and inhibits the GATOR subcomplex GATOR2 and thereby mTORC1. Binding of arginine to CASTOR1 allosterically disrupts the interaction of CASTOR1-containing dimers with GATOR2 which can in turn activate mTORC1 and the TORC1 signaling pathway. The chain is Cytosolic arginine sensor for mTORC1 subunit 1 from Bos taurus (Bovine).